The sequence spans 275 residues: MKENMLDILKNLNFTEYESKAYLALLQESPLTGYAVAKKSGVPRSKIYEVLESLVIRGDVFVSHGNTPQYVPVPAKELIKNRRLKAEEHFDQAEKYFEKFEQTANDRENIWNITGRSEILEKVKACILSAKKRILLEIWKEDFKEIEAELKQAAEQGVIVTIIAYGDIVSDFANVYLHDMSSEITEEYDGRWLVYSGDDSEVVAGIVSLGNDSRAAWTMHVGLVMPITEVIIHDLYLMEILKKHRELLEESFGKNLIQLRRKFSIHSDFKKHYLE.

Positions 75–157 (AKELIKNRRL…AELKQAAEQG (83 aa)) form a coiled coil.

This is an uncharacterized protein from Bacillus subtilis (strain 168).